A 285-amino-acid polypeptide reads, in one-letter code: Bifunctional protein FolD (285 aa).

NADP(+) is bound by residues 165–167 and Ser-190; that span reads GRS.

It belongs to the tetrahydrofolate dehydrogenase/cyclohydrolase family. Homodimer.

The enzyme catalyses (6R)-5,10-methylene-5,6,7,8-tetrahydrofolate + NADP(+) = (6R)-5,10-methenyltetrahydrofolate + NADPH. The catalysed reaction is (6R)-5,10-methenyltetrahydrofolate + H2O = (6R)-10-formyltetrahydrofolate + H(+). Its pathway is one-carbon metabolism; tetrahydrofolate interconversion. Its function is as follows. Catalyzes the oxidation of 5,10-methylenetetrahydrofolate to 5,10-methenyltetrahydrofolate and then the hydrolysis of 5,10-methenyltetrahydrofolate to 10-formyltetrahydrofolate. This Streptococcus pneumoniae (strain ATCC BAA-255 / R6) protein is Bifunctional protein FolD.